The following is a 438-amino-acid chain: uncharacterized protein (438 aa).

Disordered stretches follow at residues 1-22 (MRDN…TYDP) and 156-264 (DTAK…PWRP). A compositionally biased stretch (basic and acidic residues) spans 156 to 170 (DTAKSNEKLQGDESK). The span at 171 to 189 (SSNGSSSTSTTTQRGSTNS) shows a compositional bias: low complexity. Positions 191–206 (TKVKALKIEVKKKSDS) are enriched in basic and acidic residues.

It belongs to the adhesin P1 family.

This is an uncharacterized protein from Mycoplasma pneumoniae (strain ATCC 29342 / M129 / Subtype 1) (Mycoplasmoides pneumoniae).